The chain runs to 494 residues: Cytochrome P450 2C23 (494 aa).

Ser-131 carries the phosphoserine modification. N6-acetyllysine occurs at positions 253 and 379. Cys-439 is a binding site for heme.

Belongs to the cytochrome P450 family. Heme is required as a cofactor. As to expression, expressed in kidney and liver. Expressed in cortical tubules of kidney (at protein level).

Its subcellular location is the endoplasmic reticulum membrane. It localises to the microsome membrane. The catalysed reaction is (5Z,8Z,11Z,14Z)-eicosatetraenoate + reduced [NADPH--hemoprotein reductase] + O2 = (8R,9S)-epoxy-(5Z,11Z,14Z)-eicosatrienoate + oxidized [NADPH--hemoprotein reductase] + H2O + H(+). It catalyses the reaction (5Z,8Z,11Z,14Z)-eicosatetraenoate + reduced [NADPH--hemoprotein reductase] + O2 = (11R,12S)-epoxy-(5Z,8Z,14Z)-eicosatrienoate + oxidized [NADPH--hemoprotein reductase] + H2O + H(+). The enzyme catalyses (5Z,8Z,11Z,14Z)-eicosatetraenoate + reduced [NADPH--hemoprotein reductase] + O2 = (11S,12R)-epoxy-(5Z,8Z,14Z)-eicosatrienoate + oxidized [NADPH--hemoprotein reductase] + H2O + H(+). It carries out the reaction (5Z,8Z,11Z,14Z)-eicosatetraenoate + reduced [NADPH--hemoprotein reductase] + O2 = (14R,15S)-epoxy-(5Z,8Z,11Z)-eicosatrienoate + oxidized [NADPH--hemoprotein reductase] + H2O + H(+). The catalysed reaction is (5Z,8Z,11Z,14Z)-eicosatetraenoate + reduced [NADPH--hemoprotein reductase] + O2 = (14S,15R)-epoxy-(5Z,8Z,11Z)-eicosatrienoate + oxidized [NADPH--hemoprotein reductase] + H2O + H(+). It catalyses the reaction (5Z,8Z,11Z,14Z,17Z)-eicosapentaenoate + reduced [NADPH--hemoprotein reductase] + O2 = 8,9-epoxy-(5Z,11Z,14Z,17Z)-eicosatetraenoate + oxidized [NADPH--hemoprotein reductase] + H2O + H(+). The enzyme catalyses (5Z,8Z,11Z,14Z,17Z)-eicosapentaenoate + reduced [NADPH--hemoprotein reductase] + O2 = 11,12-epoxy-(5Z,8Z,14Z,17Z)-eicosatetraenoate + oxidized [NADPH--hemoprotein reductase] + H2O + H(+). It carries out the reaction (5Z,8Z,11Z,14Z,17Z)-eicosapentaenoate + reduced [NADPH--hemoprotein reductase] + O2 = 14,15-epoxy-(5Z,8Z,11Z,17Z)-eicosatetraenoate + oxidized [NADPH--hemoprotein reductase] + H2O + H(+). The catalysed reaction is (5Z,8Z,11Z,14Z,17Z)-eicosapentaenoate + reduced [NADPH--hemoprotein reductase] + O2 = (17R,18S)-epoxy-(5Z,8Z,11Z,14Z)-eicosatetraenoate + oxidized [NADPH--hemoprotein reductase] + H2O + H(+). It catalyses the reaction (5Z,8Z,11Z,14Z,17Z)-eicosapentaenoate + reduced [NADPH--hemoprotein reductase] + O2 = (17S,18R)-epoxy-(5Z,8Z,11Z,14Z)-eicosatetraenoate + oxidized [NADPH--hemoprotein reductase] + H2O + H(+). The enzyme catalyses 20-hydroxy-(5Z,8Z,11Z,14Z)-eicosatetraenoate + reduced [NADPH--hemoprotein reductase] + O2 = 20-hydroxy-8,9-epoxy-(5Z,11Z,14Z)-eicosatrienoate + oxidized [NADPH--hemoprotein reductase] + H2O + H(+). The protein operates within lipid metabolism; arachidonate metabolism. In terms of biological role, a cytochrome P450 monooxygenase involved in polyunsaturated fatty acids (PUFAs) metabolism and signaling. Catalyzes preferentially the epoxidation of double bonds of PUFAs. Converts arachidonic acid (ARA, C20:4(n-6)) primarily to stereospecific products 8R,9S-, 11R,12S-, and 14S,15R-EET. Plays a major role in the formation of EETs and hydroxy-EETs (HEETs) in kidney. Via EETs may inhibit the epithelial sodium channels (ENaCs) in nephron segments, preventing excessive sodium absorption during high dietary salt intake. Participates in the formation of anti-inflammatory hydroxyepoxyeicosatrienoic acids (HEETs) by converting 20-hydroxyeicosatetraenoic acid (20-HETE) to 20,8,9-HEET, an activator of PPARA. Metabolizes eicosapentaenoic acid (EPA, C20:5(n-3)) to epoxyeicosatetraenoic acid (EETeTr) regioisomers, 8,9-, 11,12-, 14,15-, and 17,18-EETeTr, preferentially producing 17R,18S enantiomer. Mechanistically, uses molecular oxygen inserting one oxygen atom into a substrate, and reducing the second into a water molecule, with two electrons provided by NADPH via cytochrome P450 reductase (NADPH--hemoprotein reductase). The sequence is that of Cytochrome P450 2C23 from Rattus norvegicus (Rat).